The primary structure comprises 180 residues: Large ribosomal subunit protein uL6 (180 aa).

The protein belongs to the universal ribosomal protein uL6 family. In terms of assembly, part of the 50S ribosomal subunit.

This protein binds to the 23S rRNA, and is important in its secondary structure. It is located near the subunit interface in the base of the L7/L12 stalk, and near the tRNA binding site of the peptidyltransferase center. This Mycoplasma capricolum subsp. capricolum (strain California kid / ATCC 27343 / NCTC 10154) protein is Large ribosomal subunit protein uL6.